The primary structure comprises 1157 residues: MAQFGGQKNPPPWATQFTATAVSQPGPLAVQQSSLLGASPTIYTQQSALAAAGLASPSPANYQLSQTAALQQQAAAAAAAAAAALQQQYTQPQQTIYSVQQQLQPPPQAILTQPAVALPTSLALSTPQQAAQITVSYPTPRSNQQQTQPQKQRVFTGVVTKLHETFGFVDEDVFFQLTAVKGKSPQAGDRVLVEATYNPNMPFKWNAQRIQTLPNQNPASAQSLIKNPAAVMQPVAQPTAYAVQTQPPPQAQTLLQAQISAATLTPLLQTQTSPLLQQPQQKAGLLQTPVRIVSQPQPVRRIEPPSRFSVRNDRGDSILSRKDDRNRERERERRRSRDRSPQRKRSRERSPRRERERSPRRPRRVVPRYTVQISKFCLDCPGCDTMELRRRYQNLYIPSDFFDAQFTWVDAFPISRPFQLGNYSNFYIMHKEVDPLEKNTAIVDPPDADHTYSAKVMLLASPSLEELYHKSCALAEDPIEVREGFQHPARLIKFLVGMKGKDEAMAIGGHWSPSLDGPNPDKDPSVLIRTAVRCCKALTGIELSLCTQWYRFAEIRYHRPEETHKGRTVPAHVETVVLFFPDVWHCLPTRSEWENLCHGYKQQLVDKLQGDRKEADGEQEEEDKEDGDAKEISTPTHWSKLDPKIMKVNDLRKELESRTLSSKGLKSQLIARLTKQLRIEEQKEEQKELEKCEKEEEEEEERKSEDDKEEEERKRQEELERQRREKRYMLPDEPAIIVHPNWSAKNGKFDCSIMSLSVLLDYRIEDNKEHSFEVSLFAELFNEMLQRDFGVRIYRELLALPEKEEKKDKEKKCKKEDKRERKEDKDDDDEPKPKRRKSSDDKIKLEEKEERKRDDRRKEDYREEDDPDYENQDDYEPIAAEEDDGDYDDREDDDDDSSSKDKREDKRDGNRYSKERQSKDKEKDKKQMVTVNRDLLMAFVYFDQSHCGYLLEKDLEEILYTLGLHLSRAQVKKLFTKILLKESLLYRKLTDTATEDGSHEETDPLHNDILGNCSLLPSKAVRTGLSTVEDKGGLIVYKGAMVDVGSLLQKLEKSEKTRTELEHRLQTLESKTEEDEKTISQLEASNRNLSEELKQTKDDVGHLKDSLKAAEDTRSLYEDQLTNTIKNLSAAMGEIQVVLNKNPSTTEDQKSKENGSS.

Disordered stretches follow at residues 289–365 (PVRI…PRRV) and 608–641 (LQGD…WSKL). Basic and acidic residues-rich tracts occupy residues 300 to 341 (RRIE…DRSP) and 348 to 359 (ERSPRRERERSP). Positions 601–625 (KQQLVDKLQGDRKEADGEQEEEDKE) form a coiled coil. Over residues 617–628 (GEQEEEDKEDGD) the composition is skewed to acidic residues. The SAP domain maps to 643-677 (PKIMKVNDLRKELESRTLSSKGLKSQLIARLTKQL). 4 stretches are compositionally biased toward basic and acidic residues: residues 685 to 694 (EQKELEKCEK), 701 to 721 (ERKS…ELER), 804 to 824 (EEKK…RKED), and 838 to 861 (SSDD…KEDY). Disordered stretches follow at residues 685-721 (EQKE…ELER) and 804-926 (EEKK…KDKK). The segment covering 862-896 (REEDDPDYENQDDYEPIAAEEDDGDYDDREDDDDD) has biased composition (acidic residues). Residues 897 to 926 (SSSKDKREDKRDGNRYSKERQSKDKEKDKK) are compositionally biased toward basic and acidic residues. Positions 1043 to 1128 (DVGSLLQKLE…DQLTNTIKNL (86 aa)) form a coiled coil. S1157 carries the phosphoserine modification.

The protein localises to the cytoplasm. The protein resides in the perinuclear region. Functionally, transcriptional coactivator for nuclear receptors which may play an important role in regulating cell growth and apoptosis. In Xenopus laevis (African clawed frog), this protein is Cell division cycle and apoptosis regulator protein 1 (ccar1).